The following is a 160-amino-acid chain: Large ribosomal subunit protein eL21B (160 aa).

Residue K32 forms a Glycyl lysine isopeptide (Lys-Gly) (interchain with G-Cter in ubiquitin) linkage.

This sequence belongs to the eukaryotic ribosomal protein eL21 family. As to quaternary structure, component of the large ribosomal subunit (LSU). Mature yeast ribosomes consist of a small (40S) and a large (60S) subunit. The 40S small subunit contains 1 molecule of ribosomal RNA (18S rRNA) and 33 different proteins (encoded by 57 genes). The large 60S subunit contains 3 rRNA molecules (25S, 5.8S and 5S rRNA) and 46 different proteins (encoded by 81 genes).

Its subcellular location is the cytoplasm. Its function is as follows. Component of the ribosome, a large ribonucleoprotein complex responsible for the synthesis of proteins in the cell. The small ribosomal subunit (SSU) binds messenger RNAs (mRNAs) and translates the encoded message by selecting cognate aminoacyl-transfer RNA (tRNA) molecules. The large subunit (LSU) contains the ribosomal catalytic site termed the peptidyl transferase center (PTC), which catalyzes the formation of peptide bonds, thereby polymerizing the amino acids delivered by tRNAs into a polypeptide chain. The nascent polypeptides leave the ribosome through a tunnel in the LSU and interact with protein factors that function in enzymatic processing, targeting, and the membrane insertion of nascent chains at the exit of the ribosomal tunnel. This is Large ribosomal subunit protein eL21B from Saccharomyces cerevisiae (strain ATCC 204508 / S288c) (Baker's yeast).